The following is a 690-amino-acid chain: MDGSEDDPTIFSARCLPSDPRLWATVTNSYLGTRVYHDTIHINGVYNGAVGDTHRASLPSPLNVQLEAPAGTEQLTETFTLDTNTGSFLHTLEGPSFRASQRIYAHRVLPHVLVFSVSIARLTTGNKPITVPLRADFSPESPDLDLRVGPDFQGLRYLHGHVLNPEQPGEPQQEVHMLWMPVPPALTLGEEEKDRTWEFLTVVGSSQAEAQDCFAEALQLQTRGVLYTIHADSWGRLWAGCGLDVAGPLALRQALRGSLYYLFSELPQPGTQGFISHGLSPGGLSNGSKEECYWGHIFWDQDIWMFPNILMFHPEAARAILEYRVRTLGGALKNGQNLGYQGAKFAWESASTGLEVCPEDIYGTQEIHINGAVALAFQLYYYYTQDSKLFQEDGGWDVVSSVAEFWCSRVEWSSQDKMYHLKGVMPPDEYHSGVNNSVYTNVLVQNSLHFAAALAKDLGLPIRKQWLEVADRIKIPFDSEQNFHPEFDGYERGEEVKQADVVLLGYPVPFPLTPDIRRKNLETYEAVTSPQGPAMTWSMFAVGWMELRDPSRAQVHLSRSFANVTEPFKVWTENADGSGAVNFLTGMGGFLQAALFGCTGFRITEAGVTFDPLCPDLVSRVSVSGISYLGNKINFAFSKDSVTLEVTARAEPWAPLLEAELWPSLAHLPLTPGQKVSFPHSAGRIQRSSP.

299–300 (WD) is a substrate binding site. The active-site Proton donor is E429. Residue 497-498 (KQ) coordinates substrate.

Belongs to the glycosyl hydrolase 65 family.

The catalysed reaction is (5R)-5-O-[alpha-D-glucosyl-(1-&gt;2)-beta-D-galactosyl]-5-hydroxy-L-lysyl-[collagen] + H2O = (5R)-5-O-(beta-D-galactosyl)-5-hydroxy-L-lysyl-[collagen] + D-glucose. Its function is as follows. Catalyzes the hydrolysis of glucose from the disaccharide unit linked to hydroxylysine residues of collagen and collagen-like proteins. In Mus musculus (Mouse), this protein is Protein-glucosylgalactosylhydroxylysine glucosidase.